Reading from the N-terminus, the 1019-residue chain is Insulin-degrading enzyme (1019 aa).

His-108 provides a ligand contact to Zn(2+). Catalysis depends on Glu-111, which acts as the Proton acceptor. Positions 112 and 189 each coordinate Zn(2+). Lys-192 is modified (N6-succinyllysine). Residue 359–363 (LVGGQ) participates in substrate binding. ATP is bound at residue Arg-429. An N6-succinyllysine modification is found at Lys-697. A SlyX motif motif is present at residues 853–858 (EKPPHY). 895-901 (DKPKKLS) contacts ATP.

This sequence belongs to the peptidase M16 family. In terms of assembly, homodimer. Can also form homotetramers. The cofactor is Zn(2+). Detected in brain and liver (at protein level). Detected in liver.

It localises to the cytoplasm. The protein localises to the cytosol. It is found in the cell membrane. The protein resides in the secreted. The enzyme catalyses Degradation of insulin, glucagon and other polypeptides. No action on proteins.. Activated by ATP, other nucleotide triphosphates and small peptides. Inhibited by bacitracin. Functionally, plays a role in the cellular breakdown of insulin, APP peptides, IAPP peptides, natriuretic peptides, glucagon, bradykinin, kallidin, and other peptides, and thereby plays a role in intercellular peptide signaling. Substrate binding induces important conformation changes, making it possible to bind and degrade larger substrates, such as insulin. Contributes to the regulation of peptide hormone signaling cascades and regulation of blood glucose homeostasis via its role in the degradation of insulin, glucagon and IAPP. Plays a role in the degradation and clearance of APP-derived amyloidogenic peptides that are secreted by neurons and microglia. Degrades the natriuretic peptides ANP, BNP and CNP, inactivating their ability to raise intracellular cGMP. Also degrades an aberrant frameshifted 40-residue form of NPPA (fsNPPA) which is associated with familial atrial fibrillation in heterozygous patients. Involved in antigen processing. Produces both the N terminus and the C terminus of MAGEA3-derived antigenic peptide (EVDPIGHLY) that is presented to cytotoxic T lymphocytes by MHC class I. In Mus musculus (Mouse), this protein is Insulin-degrading enzyme (Ide).